A 1004-amino-acid polypeptide reads, in one-letter code: Copper-transporting ATPase (1004 aa).

At 1 to 262 (MREVILAVHG…FWKKNSIKST (262 aa)) the chain is on the cytoplasmic side. HMA domains lie at 2-67 (REVI…FDCE) and 80-146 (KEGL…FDSN). Residues C13, C16, C91, and C94 each contribute to the Cu(+) site. A helical transmembrane segment spans residues 263–283 (LLAIICMLLYMIVPMMWPTIV). At 284-303 (QDRIFPYKETSFVRGLFYRD) the chain is on the lumenal, vesicle side. A helical membrane pass occupies residues 304–324 (ILGVILASYIQFSVGFYFYKA). Topologically, residues 325–335 (AWASLKHGSGT) are cytoplasmic. Residues 336–356 (MDTLVCVSTTCAYTFSVFSLV) form a helical membrane-spanning segment. Residues 357-370 (HNMFHPSSTGKLPR) are Lumenal, vesicle-facing. Residues 371–391 (IVFDTSIMIISYISIGKYLET) form a helical membrane-spanning segment. At 392 to 528 (LAKSQTSTAL…IQGYADYLAS (137 aa)) the chain is on the cytoplasmic side. A helical transmembrane segment spans residues 529-549 (IFVPGILILAVLTFFIWCFIL). Over 550–577 (NISANPPVAFTANTKADNFFICLQTATS) the chain is Lumenal, vesicle. The chain crosses the membrane as a helical span at residues 578-598 (VVIVACPCALGLATPTAIMVG). Topologically, residues 599–901 (TGVGAQNGVL…LKTFKRIKLN (303 aa)) are cytoplasmic. D627 acts as the 4-aspartylphosphate intermediate in catalysis. Residues D838 and D842 each contribute to the Mg(2+) site. Residues 902–924 (LFWALCYNIFMIPIAMGVLIPWG) form a helical membrane-spanning segment. The Lumenal, vesicle segment spans residues 925–927 (ITL). A helical membrane pass occupies residues 928 to 950 (PPMLAGLAMAFSSVSVVLSSLML). Residues 951–1004 (KKWTPPDIESHGISDFKSKFSIGNFWSRLFSTRAIAGEQDIESQAGLMSNEEVL) are Cytoplasmic-facing.

This sequence belongs to the cation transport ATPase (P-type) (TC 3.A.3) family. Type IB subfamily. Interacts with the copper chaperone ATX1 via the copper anion.

The protein resides in the golgi apparatus. It localises to the trans-Golgi network membrane. It carries out the reaction Cu(+)(in) + ATP + H2O = Cu(+)(out) + ADP + phosphate + H(+). Functionally, copper-transporting P-type ATPase necessary for the proper uptake of iron. Required for export of copper from cytosol into extracytosolic compartment. Retrieves copper from the metallochaperone ATX1 and incorporates it into trans-Golgi vesicles where they are acquired by the cell-surface iron transporter FET3. Required the production of inositolphosphorylceramide D, probably by delivering copper to a yet to be identified enzyme. The sequence is that of Copper-transporting ATPase from Saccharomyces cerevisiae (strain ATCC 204508 / S288c) (Baker's yeast).